The chain runs to 210 residues: RNA binding protein, mRNA processing factor 2 (210 aa).

Basic and acidic residues predominate over residues 1–10 (MSNLKPDVEH). The interval 1–25 (MSNLKPDVEHCTGAGTGTGTGPSGP) is disordered. Residue Ser-2 is modified to N-acetylserine. One can recognise an RRM domain in the interval 31 to 108 (RTLFVSGLPV…QTLRLEFAKA (78 aa)). The tract at residues 41–51 (DIKPRELYLLF) is important for homodimerization.

In terms of assembly, homodimer. Interacts with EEF2.

The protein localises to the cytoplasm. It is found in the nucleus. It localises to the stress granule. Functionally, RNA-binding protein involved in the regulation of smooth muscle cell differentiation and proliferation in the gastrointestinal system. Binds NOG mRNA, the major inhibitor of the bone morphogenetic protein (BMP) pathway. Mediates an increase of NOG mRNA levels, thereby contributing to the negative regulation of BMP signaling pathway and promoting reversible dedifferentiation and proliferation of smooth muscle cells. Acts as a pre-mRNA alternative splicing regulator. Mediates ACTN1 and FLNB alternative splicing. Likely binds to mRNA tandem CAC trinucleotide or CA dinucleotide motifs. In Rattus norvegicus (Rat), this protein is RNA binding protein, mRNA processing factor 2 (Rbpms2).